A 214-amino-acid chain; its full sequence is Threonylcarbamoyl-AMP synthase (214 aa).

Positions 9–214 (TDSTIQAATW…GDALTGQVIR (206 aa)) constitute a YrdC-like domain.

This sequence belongs to the SUA5 family. TsaC subfamily.

It localises to the cytoplasm. The catalysed reaction is L-threonine + hydrogencarbonate + ATP = L-threonylcarbamoyladenylate + diphosphate + H2O. Required for the formation of a threonylcarbamoyl group on adenosine at position 37 (t(6)A37) in tRNAs that read codons beginning with adenine. Catalyzes the conversion of L-threonine, HCO(3)(-)/CO(2) and ATP to give threonylcarbamoyl-AMP (TC-AMP) as the acyladenylate intermediate, with the release of diphosphate. The sequence is that of Threonylcarbamoyl-AMP synthase from Psychrobacter cryohalolentis (strain ATCC BAA-1226 / DSM 17306 / VKM B-2378 / K5).